Reading from the N-terminus, the 233-residue chain is MPSSAHLQDPPPLLSRTLTQNEGQTSLRQSSSCGPSAASASESLSGSTESRIPHSKMLQGKLPRNIPLEYPAGLYCCYVVIIVLSVAVVALSVALSVKKTAQISTINTYAACPRNWIGVGNKCFYFNEIPSNWTLSQTLCKEQGAELARFDTEEELNFLRRYKGSSGYWFGLHRESSAHPWKWTDNTEYNNSVSIGGDEKHGFLSDNGFSSGRGYIVRKSICRKPNSYTSQCL.

The disordered stretch occupies residues 1–52 (MPSSAHLQDPPPLLSRTLTQNEGQTSLRQSSSCGPSAASASESLSGSTESRI). Over 1-76 (MPSSAHLQDP…PLEYPAGLYC (76 aa)) the chain is Cytoplasmic. Positions 16–29 (RTLTQNEGQTSLRQ) are enriched in polar residues. Low complexity predominate over residues 30–50 (SSSCGPSAASASESLSGSTES). A helical; Signal-anchor for type II membrane protein membrane pass occupies residues 77-97 (CYVVIIVLSVAVVALSVALSV). At 98 to 233 (KKTAQISTIN…KPNSYTSQCL (136 aa)) the chain is on the extracellular side. Positions 119–228 (VGNKCFYFNE…KSICRKPNSY (110 aa)) constitute a C-type lectin domain. Asn132 carries an N-linked (GlcNAc...) asparagine glycan.

It localises to the cell membrane. In terms of biological role, lectin-type cell surface receptor. This is C-type lectin domain family 2 member D5 (Ocil) from Rattus norvegicus (Rat).